The primary structure comprises 155 residues: SsrA-binding protein (155 aa).

Belongs to the SmpB family.

Its subcellular location is the cytoplasm. Functionally, required for rescue of stalled ribosomes mediated by trans-translation. Binds to transfer-messenger RNA (tmRNA), required for stable association of tmRNA with ribosomes. tmRNA and SmpB together mimic tRNA shape, replacing the anticodon stem-loop with SmpB. tmRNA is encoded by the ssrA gene; the 2 termini fold to resemble tRNA(Ala) and it encodes a 'tag peptide', a short internal open reading frame. During trans-translation Ala-aminoacylated tmRNA acts like a tRNA, entering the A-site of stalled ribosomes, displacing the stalled mRNA. The ribosome then switches to translate the ORF on the tmRNA; the nascent peptide is terminated with the 'tag peptide' encoded by the tmRNA and targeted for degradation. The ribosome is freed to recommence translation, which seems to be the essential function of trans-translation. This chain is SsrA-binding protein, found in Clostridium acetobutylicum (strain ATCC 824 / DSM 792 / JCM 1419 / IAM 19013 / LMG 5710 / NBRC 13948 / NRRL B-527 / VKM B-1787 / 2291 / W).